The primary structure comprises 259 residues: Acetylglutamate kinase (259 aa).

Residues 45–46 (GG), arginine 67, and asparagine 159 each bind substrate.

Belongs to the acetylglutamate kinase family. ArgB subfamily.

It is found in the cytoplasm. It carries out the reaction N-acetyl-L-glutamate + ATP = N-acetyl-L-glutamyl 5-phosphate + ADP. The protein operates within amino-acid biosynthesis; L-arginine biosynthesis; N(2)-acetyl-L-ornithine from L-glutamate: step 2/4. Its function is as follows. Catalyzes the ATP-dependent phosphorylation of N-acetyl-L-glutamate. The protein is Acetylglutamate kinase of Aeromonas salmonicida (strain A449).